We begin with the raw amino-acid sequence, 97 residues long: Co-chaperonin GroES (97 aa).

This sequence belongs to the GroES chaperonin family. As to quaternary structure, heptamer of 7 subunits arranged in a ring. Interacts with the chaperonin GroEL.

It is found in the cytoplasm. Together with the chaperonin GroEL, plays an essential role in assisting protein folding. The GroEL-GroES system forms a nano-cage that allows encapsulation of the non-native substrate proteins and provides a physical environment optimized to promote and accelerate protein folding. GroES binds to the apical surface of the GroEL ring, thereby capping the opening of the GroEL channel. The sequence is that of Co-chaperonin GroES from Proteus mirabilis (strain HI4320).